A 206-amino-acid polypeptide reads, in one-letter code: Holliday junction branch migration complex subunit RuvA (206 aa).

The interval Met1–Asn64 is domain I. The interval Thr65–Pro143 is domain II. The tract at residues Ala144 to Ser157 is flexible linker. The segment at Ser158–Ile206 is domain III.

The protein belongs to the RuvA family. In terms of assembly, homotetramer. Forms an RuvA(8)-RuvB(12)-Holliday junction (HJ) complex. HJ DNA is sandwiched between 2 RuvA tetramers; dsDNA enters through RuvA and exits via RuvB. An RuvB hexamer assembles on each DNA strand where it exits the tetramer. Each RuvB hexamer is contacted by two RuvA subunits (via domain III) on 2 adjacent RuvB subunits; this complex drives branch migration. In the full resolvosome a probable DNA-RuvA(4)-RuvB(12)-RuvC(2) complex forms which resolves the HJ.

It localises to the cytoplasm. The RuvA-RuvB-RuvC complex processes Holliday junction (HJ) DNA during genetic recombination and DNA repair, while the RuvA-RuvB complex plays an important role in the rescue of blocked DNA replication forks via replication fork reversal (RFR). RuvA specifically binds to HJ cruciform DNA, conferring on it an open structure. The RuvB hexamer acts as an ATP-dependent pump, pulling dsDNA into and through the RuvAB complex. HJ branch migration allows RuvC to scan DNA until it finds its consensus sequence, where it cleaves and resolves the cruciform DNA. This Aliivibrio salmonicida (strain LFI1238) (Vibrio salmonicida (strain LFI1238)) protein is Holliday junction branch migration complex subunit RuvA.